The chain runs to 103 residues: N(4)-acetylcytidine amidohydrolase (103 aa).

In terms of domain architecture, ASCH spans 6–101; the sequence is ITFFQRFQDD…QTQFYVIEFK (96 aa). Lys-21 serves as the catalytic Proton acceptor. Thr-24 acts as the Nucleophile in catalysis. Glu-74 acts as the Proton donor in catalysis.

The protein belongs to the N(4)-acetylcytidine amidohydrolase family.

The enzyme catalyses N(4)-acetylcytidine + H2O = cytidine + acetate + H(+). It carries out the reaction N(4)-acetyl-2'-deoxycytidine + H2O = 2'-deoxycytidine + acetate + H(+). It catalyses the reaction N(4)-acetylcytosine + H2O = cytosine + acetate + H(+). Catalyzes the hydrolysis of N(4)-acetylcytidine (ac4C). This Escherichia fergusonii (strain ATCC 35469 / DSM 13698 / CCUG 18766 / IAM 14443 / JCM 21226 / LMG 7866 / NBRC 102419 / NCTC 12128 / CDC 0568-73) protein is N(4)-acetylcytidine amidohydrolase (yqfB).